Here is an 861-residue protein sequence, read N- to C-terminus: Leucine--tRNA ligase (861 aa).

The 'HIGH' region signature appears at 42–52 (PYPSGRLHMGH). The 'KMSKS' region signature appears at 619 to 623 (KMSKS). K622 lines the ATP pocket.

Belongs to the class-I aminoacyl-tRNA synthetase family.

The protein localises to the cytoplasm. The enzyme catalyses tRNA(Leu) + L-leucine + ATP = L-leucyl-tRNA(Leu) + AMP + diphosphate. The sequence is that of Leucine--tRNA ligase from Haemophilus influenzae (strain PittEE).